Here is a 414-residue protein sequence, read N- to C-terminus: Tyrosine--tRNA ligase (414 aa).

Residues 57–66 (PSAPDVHIGH) carry the 'HIGH' region motif. A 'KMSKS' region motif is present at residues 241–245 (KMSKS). ATP is bound at residue Lys-244. The 62-residue stretch at 352–413 (VPLIDLLVTL…GKRKFAKLSL (62 aa)) folds into the S4 RNA-binding domain.

Belongs to the class-I aminoacyl-tRNA synthetase family. TyrS type 2 subfamily. Homodimer.

The protein localises to the cytoplasm. It catalyses the reaction tRNA(Tyr) + L-tyrosine + ATP = L-tyrosyl-tRNA(Tyr) + AMP + diphosphate + H(+). Catalyzes the attachment of tyrosine to tRNA(Tyr) in a two-step reaction: tyrosine is first activated by ATP to form Tyr-AMP and then transferred to the acceptor end of tRNA(Tyr). The chain is Tyrosine--tRNA ligase from Shouchella clausii (strain KSM-K16) (Alkalihalobacillus clausii).